Consider the following 357-residue polypeptide: MPYIGSLKVNQFRNLADVDITPHSQFNFFFGQNGAGKTSILESIYYLSVGRSFRTHLPQRLIQDNTDRFLIFITLYNGTQFIPLGVERDCHGDRCLRINGETASSWSLAAKRLPLCSLSAMSHRFLLDGPRVRRQFLDWLMFHVEPSFFSIWQRLQRSLKQRNAALKAKLPLGEITHWDKMLVEDGERLHQLRQNVVTEFKPLFTQMLQQFLPAYPLIGHYFRGWSEKYSLMEQLQINLKQDLQRGYTQAGPQRADFRLTLRDLPAQDILSQGQQKLVTYALHFAQGLLLKEKTGISPIYLIDDLPAELDANKRDCVIDLVNCLESQVFISGIDPNEIRLPPHSTLFHVKHGKVAAL.

31-38 (GQNGAGKT) contributes to the ATP binding site.

The protein belongs to the RecF family.

It is found in the cytoplasm. Functionally, the RecF protein is involved in DNA metabolism; it is required for DNA replication and normal SOS inducibility. RecF binds preferentially to single-stranded, linear DNA. It also seems to bind ATP. The sequence is that of DNA replication and repair protein RecF from Coxiella burnetii (strain CbuG_Q212) (Coxiella burnetii (strain Q212)).